The sequence spans 57 residues: Ribosome modulation factor 1 (57 aa).

The segment covering 1–14 (MKRQKRDRQSRAHT) has biased composition (basic residues). Positions 1–24 (MKRQKRDRQSRAHTRGYQAGISGR) are disordered.

It belongs to the ribosome modulation factor family.

It is found in the cytoplasm. During stationary phase, converts 70S ribosomes to an inactive dimeric form (100S ribosomes). The chain is Ribosome modulation factor 1 from Colwellia psychrerythraea (strain 34H / ATCC BAA-681) (Vibrio psychroerythus).